The chain runs to 412 residues: Imidazolonepropionase (412 aa).

The Fe(3+) site is built by histidine 73 and histidine 75. Residues histidine 73 and histidine 75 each coordinate Zn(2+). 4-imidazolone-5-propanoate-binding residues include arginine 82, tyrosine 145, and histidine 178. Position 145 (tyrosine 145) interacts with N-formimidoyl-L-glutamate. Histidine 247 provides a ligand contact to Fe(3+). Histidine 247 lines the Zn(2+) pocket. Glutamine 250 is a 4-imidazolone-5-propanoate binding site. Aspartate 322 serves as a coordination point for Fe(3+). Aspartate 322 is a binding site for Zn(2+). Positions 324 and 326 each coordinate N-formimidoyl-L-glutamate. A 4-imidazolone-5-propanoate-binding site is contributed by serine 327.

It belongs to the metallo-dependent hydrolases superfamily. HutI family. The cofactor is Zn(2+). Fe(3+) serves as cofactor.

The protein resides in the cytoplasm. The catalysed reaction is 4-imidazolone-5-propanoate + H2O = N-formimidoyl-L-glutamate. Its pathway is amino-acid degradation; L-histidine degradation into L-glutamate; N-formimidoyl-L-glutamate from L-histidine: step 3/3. Catalyzes the hydrolytic cleavage of the carbon-nitrogen bond in imidazolone-5-propanoate to yield N-formimidoyl-L-glutamate. It is the third step in the universal histidine degradation pathway. In Shewanella amazonensis (strain ATCC BAA-1098 / SB2B), this protein is Imidazolonepropionase.